Consider the following 313-residue polypeptide: UPF0761 membrane protein VS_0126 (313 aa).

A run of 6 helical transmembrane segments spans residues 41 to 61 (YLAY…LSIL), 104 to 124 (MTAV…SNID), 139 to 159 (AVLS…LIGA), 185 to 205 (VIRK…YLLV), 217 to 237 (AGSL…AAYI), and 249 to 269 (ALAA…IVLV). Over residues 281-290 (EQWSDSQEMV) the composition is skewed to polar residues. Residues 281 to 313 (EQWSDSQEMVHSSDKDKITEQGNNSDSTDPESK) are disordered.

The protein belongs to the UPF0761 family.

The protein localises to the cell inner membrane. The polypeptide is UPF0761 membrane protein VS_0126 (Vibrio atlanticus (strain LGP32) (Vibrio splendidus (strain Mel32))).